We begin with the raw amino-acid sequence, 38 residues long: Photosystem II reaction center protein X (38 aa).

A helical membrane pass occupies residues 9–29 (ISSLTAGGLVVLTIAVALIVI).

Belongs to the PsbX family. Type 1 subfamily. In terms of assembly, PSII is composed of 1 copy each of membrane proteins PsbA, PsbB, PsbC, PsbD, PsbE, PsbF, PsbH, PsbI, PsbJ, PsbK, PsbL, PsbM, PsbT, PsbX, PsbY, PsbZ, Psb30/Ycf12, at least 3 peripheral proteins of the oxygen-evolving complex and a large number of cofactors. It forms dimeric complexes.

Its subcellular location is the plastid. It is found in the chloroplast thylakoid membrane. In terms of biological role, involved in the binding and/or turnover of quinones at the Q(B) site of photosystem II (PSII). PSII is a light-driven water plastoquinone oxidoreductase, using light energy to abstract electrons from H(2)O, generating a proton gradient subsequently used for ATP formation. The sequence is that of Photosystem II reaction center protein X from Trieres chinensis (Marine centric diatom).